A 355-amino-acid chain; its full sequence is Mannonate dehydratase (355 aa).

Belongs to the mannonate dehydratase family. It depends on Fe(2+) as a cofactor. Mn(2+) is required as a cofactor.

The enzyme catalyses D-mannonate = 2-dehydro-3-deoxy-D-gluconate + H2O. It functions in the pathway carbohydrate metabolism; pentose and glucuronate interconversion. Its function is as follows. Catalyzes the dehydration of D-mannonate. The sequence is that of Mannonate dehydratase from Brachyspira hyodysenteriae (strain ATCC 49526 / WA1).